A 184-amino-acid polypeptide reads, in one-letter code: Photosystem I assembly protein Ycf4 (184 aa).

2 helical membrane-spanning segments follow: residues 22-42 and 57-77; these read FCWA…GTSS and IIFF…LFIS.

The protein belongs to the Ycf4 family.

Its subcellular location is the plastid. The protein localises to the chloroplast thylakoid membrane. Its function is as follows. Seems to be required for the assembly of the photosystem I complex. This is Photosystem I assembly protein Ycf4 from Platanus occidentalis (Sycamore).